The following is a 494-amino-acid chain: Guanosine-5'-triphosphate,3'-diphosphate pyrophosphatase (494 aa).

This sequence belongs to the GppA/Ppx family. GppA subfamily.

The enzyme catalyses guanosine 3'-diphosphate 5'-triphosphate + H2O = guanosine 3',5'-bis(diphosphate) + phosphate + H(+). The protein operates within purine metabolism; ppGpp biosynthesis; ppGpp from GTP: step 2/2. Functionally, catalyzes the conversion of pppGpp to ppGpp. Guanosine pentaphosphate (pppGpp) is a cytoplasmic signaling molecule which together with ppGpp controls the 'stringent response', an adaptive process that allows bacteria to respond to amino acid starvation, resulting in the coordinated regulation of numerous cellular activities. The protein is Guanosine-5'-triphosphate,3'-diphosphate pyrophosphatase of Citrobacter koseri (strain ATCC BAA-895 / CDC 4225-83 / SGSC4696).